The chain runs to 216 residues: Protein-L-isoaspartate O-methyltransferase (216 aa).

Ser-61 is an active-site residue.

The protein belongs to the methyltransferase superfamily. L-isoaspartyl/D-aspartyl protein methyltransferase family.

It is found in the cytoplasm. It catalyses the reaction [protein]-L-isoaspartate + S-adenosyl-L-methionine = [protein]-L-isoaspartate alpha-methyl ester + S-adenosyl-L-homocysteine. In terms of biological role, catalyzes the methyl esterification of L-isoaspartyl residues in peptides and proteins that result from spontaneous decomposition of normal L-aspartyl and L-asparaginyl residues. It plays a role in the repair and/or degradation of damaged proteins. The polypeptide is Protein-L-isoaspartate O-methyltransferase (Dinoroseobacter shibae (strain DSM 16493 / NCIMB 14021 / DFL 12)).